The sequence spans 832 residues: FAST kinase domain-containing protein 1, mitochondrial (832 aa).

Residues 765–825 (VAIEFLDSKA…KDAWIDYLRK (61 aa)) enclose the RAP domain.

Belongs to the FAST kinase family.

Its subcellular location is the mitochondrion. Its function is as follows. May regulate the stability of some mitochondrial mRNA species. In Xenopus tropicalis (Western clawed frog), this protein is FAST kinase domain-containing protein 1, mitochondrial (fastkd1).